Here is a 128-residue protein sequence, read N- to C-terminus: MAYRKLGRTSSQRKAMLRDLTTDLLINESIVTTEARAKEIRKTVEKMITLGKRGDLHARRQAAAYVRNEIASENYDEAADKYTSTTALQKLFSEIAPRYAERNGGYTRILKTEPRRGDAAPMAIIELV.

This sequence belongs to the bacterial ribosomal protein bL17 family. In terms of assembly, part of the 50S ribosomal subunit. Contacts protein L32.

The polypeptide is Large ribosomal subunit protein bL17 (Streptococcus pyogenes serotype M49 (strain NZ131)).